A 225-amino-acid chain; its full sequence is Uridylate kinase (225 aa).

9 to 10 (GS) is a binding site for ATP. Gly-44 provides a ligand contact to UMP. Residues Gly-45 and Arg-49 each coordinate ATP. Residues Asp-66 and 114–120 (THPGHTT) contribute to the UMP site. ATP-binding residues include Thr-140, Asn-141, Tyr-146, and Asp-149.

It belongs to the UMP kinase family. Homohexamer.

It localises to the cytoplasm. The enzyme catalyses UMP + ATP = UDP + ADP. Its pathway is pyrimidine metabolism; CTP biosynthesis via de novo pathway; UDP from UMP (UMPK route): step 1/1. Inhibited by UTP. Its function is as follows. Catalyzes the reversible phosphorylation of UMP to UDP. The protein is Uridylate kinase of Thermococcus gammatolerans (strain DSM 15229 / JCM 11827 / EJ3).